Here is a 393-residue protein sequence, read N- to C-terminus: Pre-mRNA-splicing regulator WTAP (393 aa).

The tract at residues 242–393 (QIQISGNRTP…SSVNVQGSVL (152 aa)) is disordered. Over residues 254-267 (EPKDEGETSGKDCG) the composition is skewed to basic and acidic residues. Composition is skewed to polar residues over residues 272–286 (GPSN…THSS) and 321–353 (DGSS…SNDT). Positions 354 to 365 (DSNHDSQEEKPV) are enriched in basic and acidic residues. The segment covering 369–393 (GNRTVSSRHLQNGLDSSVNVQGSVL) has biased composition (polar residues).

Belongs to the fl(2)d family. Component of the WMM complex, a N6-methyltransferase complex composed of a catalytic subcomplex, named MAC, and of an associated subcomplex, named MACOM. Component of the MACOM subcomplex.

The protein resides in the nucleus speckle. It localises to the nucleus. It is found in the nucleoplasm. Functionally, associated component of the WMM complex, a complex that mediates N6-methyladenosine (m6A) methylation of RNAs, a modification that plays a role in the efficiency of mRNA splicing and RNA processing. This Xenopus laevis (African clawed frog) protein is Pre-mRNA-splicing regulator WTAP.